The chain runs to 239 residues: Ribonuclease PH (239 aa).

Phosphate contacts are provided by residues Arg87 and 125–127 (GTR).

Belongs to the RNase PH family. In terms of assembly, homohexameric ring arranged as a trimer of dimers.

The catalysed reaction is tRNA(n+1) + phosphate = tRNA(n) + a ribonucleoside 5'-diphosphate. Phosphorolytic 3'-5' exoribonuclease that plays an important role in tRNA 3'-end maturation. Removes nucleotide residues following the 3'-CCA terminus of tRNAs; can also add nucleotides to the ends of RNA molecules by using nucleoside diphosphates as substrates, but this may not be physiologically important. Probably plays a role in initiation of 16S rRNA degradation (leading to ribosome degradation) during starvation. The protein is Ribonuclease PH of Syntrophomonas wolfei subsp. wolfei (strain DSM 2245B / Goettingen).